The primary structure comprises 282 residues: Phosphatidylserine decarboxylase proenzyme (282 aa).

Catalysis depends on charge relay system; for autoendoproteolytic cleavage activity residues Asp85, His142, and Ser244. Ser244 functions as the Schiff-base intermediate with substrate; via pyruvic acid; for decarboxylase activity in the catalytic mechanism. At Ser244 the chain carries Pyruvic acid (Ser); by autocatalysis.

Belongs to the phosphatidylserine decarboxylase family. PSD-B subfamily. Prokaryotic type I sub-subfamily. In terms of assembly, heterodimer of a large membrane-associated beta subunit and a small pyruvoyl-containing alpha subunit. Pyruvate serves as cofactor. Is synthesized initially as an inactive proenzyme. Formation of the active enzyme involves a self-maturation process in which the active site pyruvoyl group is generated from an internal serine residue via an autocatalytic post-translational modification. Two non-identical subunits are generated from the proenzyme in this reaction, and the pyruvate is formed at the N-terminus of the alpha chain, which is derived from the carboxyl end of the proenzyme. The autoendoproteolytic cleavage occurs by a canonical serine protease mechanism, in which the side chain hydroxyl group of the serine supplies its oxygen atom to form the C-terminus of the beta chain, while the remainder of the serine residue undergoes an oxidative deamination to produce ammonia and the pyruvoyl prosthetic group on the alpha chain. During this reaction, the Ser that is part of the protease active site of the proenzyme becomes the pyruvoyl prosthetic group, which constitutes an essential element of the active site of the mature decarboxylase.

The protein resides in the cell membrane. It catalyses the reaction a 1,2-diacyl-sn-glycero-3-phospho-L-serine + H(+) = a 1,2-diacyl-sn-glycero-3-phosphoethanolamine + CO2. Its pathway is phospholipid metabolism; phosphatidylethanolamine biosynthesis; phosphatidylethanolamine from CDP-diacylglycerol: step 2/2. Functionally, catalyzes the formation of phosphatidylethanolamine (PtdEtn) from phosphatidylserine (PtdSer). The polypeptide is Phosphatidylserine decarboxylase proenzyme (Coxiella burnetii (strain CbuG_Q212) (Coxiella burnetii (strain Q212))).